The primary structure comprises 565 residues: Bifunctional dihydrofolate reductase-thymidylate synthase 2 (565 aa).

Residues 65 to 242 (TYQVVVAATK…LRFSFTTHVR (178 aa)) enclose the DHFR domain. Val-69 provides a ligand contact to substrate. Residues Ala-71 and 77 to 83 (GIGKDGK) contribute to the NADP(+) site. Asp-91 is a binding site for substrate. Residues 115-117 (RKT) and 136-139 (LSRS) each bind NADP(+). Substrate is bound at residue Ile-178. An NADP(+)-binding site is contributed by 179 to 186 (GGGDILRE). Substrate is bound at residue Thr-199. Residues 245 to 280 (SSSAGEASDESDGSKVLQVDWKKFSSVLPKMIFDRH) are hinge. Positions 281–565 (EEYLYLNLVK…HKKIDMKMAV (285 aa)) are thymidylate synthase. DUMP is bound at residue Arg-302. Residue Cys-447 is part of the active site. DUMP-binding positions include His-448, 466 to 470 (QRSAD), Asn-478, and 508 to 510 (HVY).

In the N-terminal section; belongs to the dihydrofolate reductase family. The protein in the C-terminal section; belongs to the thymidylate synthase family. As to quaternary structure, heterodimer or homodimer.

It carries out the reaction (6S)-5,6,7,8-tetrahydrofolate + NADP(+) = 7,8-dihydrofolate + NADPH + H(+). The enzyme catalyses dUMP + (6R)-5,10-methylene-5,6,7,8-tetrahydrofolate = 7,8-dihydrofolate + dTMP. It participates in cofactor biosynthesis; tetrahydrofolate biosynthesis; 5,6,7,8-tetrahydrofolate from 7,8-dihydrofolate: step 1/1. In terms of biological role, bifunctional enzyme. Involved in de novo dTMP biosynthesis. Key enzyme in folate metabolism. Can play two different roles depending on the source of dihydrofolate: de novo synthesis of tetrahydrofolate or recycling of the dihydrofolate released as one of the end products of the TS catalyzed reaction. Catalyzes an essential reaction for de novo glycine and purine synthesis, DNA precursor synthesis, and for the conversion of dUMP to dTMP. This chain is Bifunctional dihydrofolate reductase-thymidylate synthase 2 (THY-2), found in Arabidopsis thaliana (Mouse-ear cress).